The chain runs to 137 residues: Cell division protein SepF (137 aa).

The protein belongs to the SepF family. Homodimer. Interacts with FtsZ.

The protein localises to the cytoplasm. Cell division protein that is part of the divisome complex and is recruited early to the Z-ring. Probably stimulates Z-ring formation, perhaps through the cross-linking of FtsZ protofilaments. Its function overlaps with FtsA. This chain is Cell division protein SepF, found in Carboxydothermus hydrogenoformans (strain ATCC BAA-161 / DSM 6008 / Z-2901).